The following is a 221-amino-acid chain: ATP-dependent dethiobiotin synthetase BioD (221 aa).

ATP is bound at residue 11-16; sequence DIGKTL. Threonine 15 serves as a coordination point for Mg(2+). Residue lysine 35 is part of the active site. Position 39 (threonine 39) interacts with substrate. Residues aspartate 44 and 103–106 contribute to the ATP site; that span reads EGAG. Mg(2+) is bound by residues aspartate 44 and glutamate 103.

The protein belongs to the dethiobiotin synthetase family. Homodimer. Mg(2+) is required as a cofactor.

Its subcellular location is the cytoplasm. The catalysed reaction is (7R,8S)-7,8-diammoniononanoate + CO2 + ATP = (4R,5S)-dethiobiotin + ADP + phosphate + 3 H(+). It functions in the pathway cofactor biosynthesis; biotin biosynthesis; biotin from 7,8-diaminononanoate: step 1/2. Catalyzes a mechanistically unusual reaction, the ATP-dependent insertion of CO2 between the N7 and N8 nitrogen atoms of 7,8-diaminopelargonic acid (DAPA, also called 7,8-diammoniononanoate) to form a ureido ring. The protein is ATP-dependent dethiobiotin synthetase BioD of Leptospira borgpetersenii serovar Hardjo-bovis (strain L550).